Here is a 325-residue protein sequence, read N- to C-terminus: DDB1- and CUL4-associated factor 7 homolog (325 aa).

WD repeat units lie at residues 62-104, 115-155, 158-197, and 247-287; these read EHPY…RSIK, EFCA…AKTQ, AHDKEVFDIAFARGTDLFASVGADGSLRMFDLRNLEHSTI, and FHKS…KPIE.

The protein belongs to the WD repeat DCAF7 family.

This is DDB1- and CUL4-associated factor 7 homolog (wdr68) from Dictyostelium discoideum (Social amoeba).